A 100-amino-acid chain; its full sequence is Urease subunit gamma (100 aa).

The protein belongs to the urease gamma subunit family. In terms of assembly, heterotrimer of UreA (gamma), UreB (beta) and UreC (alpha) subunits. Three heterotrimers associate to form the active enzyme.

The protein localises to the cytoplasm. The enzyme catalyses urea + 2 H2O + H(+) = hydrogencarbonate + 2 NH4(+). It functions in the pathway nitrogen metabolism; urea degradation; CO(2) and NH(3) from urea (urease route): step 1/1. This Arthrobacter sp. (strain FB24) protein is Urease subunit gamma.